We begin with the raw amino-acid sequence, 550 residues long: CTP synthase (550 aa).

Residues 1–267 are amidoligase domain; that stretch reads MKTKFIFITG…DQKIAIMLRL (267 aa). CTP is bound at residue Ser14. Position 14 (Ser14) interacts with UTP. Residues 15–20 and Asp72 contribute to the ATP site; that span reads SLGKGL. Residues Asp72 and Glu141 each coordinate Mg(2+). CTP is bound by residues 148-150, 188-193, and Lys224; these read DIE and KTKPTQ. UTP contacts are provided by residues 188 to 193 and Lys224; that span reads KTKPTQ. A Glutamine amidotransferase type-1 domain is found at 292 to 545; it reads TIGIVGKYVD…IKAAKKEAMG (254 aa). Gly354 lines the L-glutamine pocket. Cys381 acts as the Nucleophile; for glutamine hydrolysis in catalysis. Residues 382–385, Glu405, and Arg473 contribute to the L-glutamine site; that span reads LGMQ. Active-site residues include His518 and Glu520.

It belongs to the CTP synthase family. Homotetramer.

The catalysed reaction is UTP + L-glutamine + ATP + H2O = CTP + L-glutamate + ADP + phosphate + 2 H(+). The enzyme catalyses L-glutamine + H2O = L-glutamate + NH4(+). It catalyses the reaction UTP + NH4(+) + ATP = CTP + ADP + phosphate + 2 H(+). It functions in the pathway pyrimidine metabolism; CTP biosynthesis via de novo pathway; CTP from UDP: step 2/2. With respect to regulation, allosterically activated by GTP, when glutamine is the substrate; GTP has no effect on the reaction when ammonia is the substrate. The allosteric effector GTP functions by stabilizing the protein conformation that binds the tetrahedral intermediate(s) formed during glutamine hydrolysis. Inhibited by the product CTP, via allosteric rather than competitive inhibition. Its function is as follows. Catalyzes the ATP-dependent amination of UTP to CTP with either L-glutamine or ammonia as the source of nitrogen. Regulates intracellular CTP levels through interactions with the four ribonucleotide triphosphates. The sequence is that of CTP synthase from Nitratidesulfovibrio vulgaris (strain DSM 19637 / Miyazaki F) (Desulfovibrio vulgaris).